The sequence spans 63 residues: Large ribosomal subunit protein uL29 (63 aa).

This sequence belongs to the universal ribosomal protein uL29 family.

This is Large ribosomal subunit protein uL29 from Alcanivorax borkumensis (strain ATCC 700651 / DSM 11573 / NCIMB 13689 / SK2).